Reading from the N-terminus, the 92-residue chain is Elongation factor 1-beta (92 aa).

Belongs to the EF-1-beta/EF-1-delta family.

Promotes the exchange of GDP for GTP in EF-1-alpha/GDP, thus allowing the regeneration of EF-1-alpha/GTP that could then be used to form the ternary complex EF-1-alpha/GTP/AAtRNA. The sequence is that of Elongation factor 1-beta from Pyrobaculum arsenaticum (strain DSM 13514 / JCM 11321 / PZ6).